We begin with the raw amino-acid sequence, 78 residues long: COP9 signalosome complex subunit 5b (78 aa).

Belongs to the peptidase M67A family. CSN5 subfamily. In terms of assembly, component of the CSN complex, probably composed of CSN1, CSN2, CSN3, CSN4, CSN5 (CSN5A or CSN5B), CSN6 (CSN6A or CSN6B), CSN7 and CSN8. It depends on a divalent metal cation as a cofactor.

Its subcellular location is the cytoplasm. The protein localises to the nucleus. In terms of biological role, probable protease subunit of the COP9 signalosome complex (CSN), a complex involved in various cellular and developmental processes such as photomorphogenesis and auxin and jasmonate responses. The CSN complex is an essential regulator of the ubiquitin (Ubl) conjugation pathway by mediating the deneddylation of the cullin subunits of the SCF-type E3 ligase complexes, leading to decrease the Ubl ligase activity of SCF. In the complex, it probably acts as the catalytic center that mediates the cleavage of Nedd8 from cullins. It however has no metalloprotease activity by itself and requires the other subunits of the CSN complex. The CSN complex is involved in repression of photomorphogenesis in darkness by regulating the activity of COP1-containing Ubl ligase complexes. In Brassica oleracea (Wild cabbage), this protein is COP9 signalosome complex subunit 5b (CSN5B).